A 42-amino-acid chain; its full sequence is Photosystem I reaction center subunit IX (42 aa).

The helical transmembrane segment at 8–28 threads the bilayer; that stretch reads YLSTAPVLFTVWLSFTASFII.

This sequence belongs to the PsaJ family.

Its subcellular location is the plastid. It localises to the chloroplast thylakoid membrane. In terms of biological role, may help in the organization of the PsaE and PsaF subunits. This Rhodomonas salina (Cryptomonas salina) protein is Photosystem I reaction center subunit IX.